The sequence spans 855 residues: Protein translocase subunit SecA (855 aa).

ATP contacts are provided by residues Gln-85, 103–107 (GEGKT), and Asp-492. The tract at residues 794–845 (AAIHEESSSAAAPGPGQNQPGGPGGPSAGPVAPVRNLDKHGRNELCPCGSGK) is disordered. Residues 801 to 811 (SSAAAPGPGQN) show a composition bias toward low complexity. Zn(2+) is bound by residues Cys-839, Cys-841, Cys-850, and Cys-851.

It belongs to the SecA family. In terms of assembly, monomer and homodimer. Part of the essential Sec protein translocation apparatus which comprises SecA, SecYEG and auxiliary proteins SecDF. Other proteins may also be involved. The cofactor is Zn(2+).

It is found in the cell membrane. It localises to the cytoplasm. The catalysed reaction is ATP + H2O + cellular proteinSide 1 = ADP + phosphate + cellular proteinSide 2.. Functionally, part of the Sec protein translocase complex. Interacts with the SecYEG preprotein conducting channel. Has a central role in coupling the hydrolysis of ATP to the transfer of proteins into and across the cell membrane, serving as an ATP-driven molecular motor driving the stepwise translocation of polypeptide chains across the membrane. This Clostridium beijerinckii (strain ATCC 51743 / NCIMB 8052) (Clostridium acetobutylicum) protein is Protein translocase subunit SecA.